The chain runs to 61 residues: Small ribosomal subunit protein uS14 (61 aa).

Residues Cys24, Cys27, Cys40, and Cys43 each coordinate Zn(2+).

The protein belongs to the universal ribosomal protein uS14 family. Zinc-binding uS14 subfamily. In terms of assembly, part of the 30S ribosomal subunit. Contacts proteins S3 and S10. The cofactor is Zn(2+).

Its function is as follows. Binds 16S rRNA, required for the assembly of 30S particles and may also be responsible for determining the conformation of the 16S rRNA at the A site. The chain is Small ribosomal subunit protein uS14 from Malacoplasma penetrans (strain HF-2) (Mycoplasma penetrans).